Here is a 118-residue protein sequence, read N- to C-terminus: Vesicle-associated membrane protein 1 (118 aa).

A compositionally biased stretch (low complexity) spans 1–15 (MSAPAQPPAEGTEGA). Positions 1-36 (MSAPAQPPAEGTEGAAPGGGPPGPPPNMTSNRRLQQ) are disordered. Residues 1–96 (MSAPAQPPAE…KRKYWWKNCK (96 aa)) lie on the Cytoplasmic side of the membrane. The region spanning 33–93 (RLQQTQAQVE…AKLKRKYWWK (61 aa)) is the v-SNARE coiled-coil homology domain. Serine 63 carries the phosphoserine modification. Residues 97–116 (MMIMLGAICAIIVVVIVIYF) form a helical; Anchor for type IV membrane protein membrane-spanning segment. The Vesicular segment spans residues 117 to 118 (FT).

The protein belongs to the synaptobrevin family. Interacts with VAPA and VAPB. In terms of processing, (Microbial infection) Targeted and hydrolyzed by C.botulinum neurotoxin type X (BoNT/X) which hydrolyzes the 68-Arg-|-Ala-69 bond and probably inhibits neurotransmitter release. It remains unknown whether BoNT/X is ever produced, or what organisms it targets. As to expression, highly expressed in the zona incerta and rostral periolivary region of the brain. Other neuroanatomical regions show negligible expression. Expressed in the retina, expression observed in the outer segments of the photoreceptors, in the outer and inner plexiform layers, and in a subset of ganglion cells.

The protein localises to the cytoplasmic vesicle. It is found in the secretory vesicle. Its subcellular location is the synaptic vesicle membrane. It localises to the synapse. The protein resides in the synaptosome. The protein localises to the cytoplasmic vesicle membrane. In terms of biological role, involved in the targeting and/or fusion of transport vesicles to their target membrane. The sequence is that of Vesicle-associated membrane protein 1 (Vamp1) from Mus musculus (Mouse).